The following is a 668-amino-acid chain: Endoplasmic reticulum membrane-associated RNA degradation protein (668 aa).

A run of 2 helical transmembrane segments spans residues 378–398 and 575–595; these read LLAF…LSVF and VLSL…AVCG.

The protein resides in the endoplasmic reticulum membrane. May play a role in neuronal migration during embryonic development. The chain is Endoplasmic reticulum membrane-associated RNA degradation protein (ERMARD) from Macaca fascicularis (Crab-eating macaque).